Here is a 426-residue protein sequence, read N- to C-terminus: Glutamate-1-semialdehyde 2,1-aminomutase (426 aa).

Lys265 carries the post-translational modification N6-(pyridoxal phosphate)lysine.

It belongs to the class-III pyridoxal-phosphate-dependent aminotransferase family. HemL subfamily. As to quaternary structure, homodimer. Requires pyridoxal 5'-phosphate as cofactor.

Its subcellular location is the cytoplasm. The enzyme catalyses (S)-4-amino-5-oxopentanoate = 5-aminolevulinate. It participates in porphyrin-containing compound metabolism; protoporphyrin-IX biosynthesis; 5-aminolevulinate from L-glutamyl-tRNA(Glu): step 2/2. This Paraburkholderia phymatum (strain DSM 17167 / CIP 108236 / LMG 21445 / STM815) (Burkholderia phymatum) protein is Glutamate-1-semialdehyde 2,1-aminomutase.